Reading from the N-terminus, the 336-residue chain is Alcohol dehydrogenase (336 aa).

Residues Cys-37, His-58, Cys-89, Cys-92, Cys-95, Cys-103, and Cys-145 each contribute to the Zn(2+) site.

It belongs to the zinc-containing alcohol dehydrogenase family. It depends on Zn(2+) as a cofactor.

It catalyses the reaction a primary alcohol + NAD(+) = an aldehyde + NADH + H(+). The catalysed reaction is a secondary alcohol + NAD(+) = a ketone + NADH + H(+). This chain is Alcohol dehydrogenase (adh), found in Staphylococcus aureus (strain USA300).